We begin with the raw amino-acid sequence, 215 residues long: GTP-binding nuclear protein ran-1 (215 aa).

In terms of domain architecture, Small GTPase Ran-type spans 6–170; the sequence is GIPTFKLVLV…LWLARKLLGD (165 aa). GTP is bound at residue 17 to 24; it reads DGGTGKTT. A switch-I region spans residues 36–44; it reads KKYVATLGV. GTP-binding positions include G67, 121-124, and 149-151; these read NKVD and SAK. The interval 67–83 is switch-II; that stretch reads GQEKFGGLRDGYYIQGQ.

It belongs to the small GTPase superfamily. Ran family. Found in a nuclear export complex with RanGTP, exportin and pre-miRNA.

The protein resides in the nucleus. It localises to the chromosome. The protein localises to the centromere. It is found in the kinetochore. In terms of biological role, ran GTPase system comprises ran-1, ran-2 and ran-3 and is essential in nucleocytoplasmic transport. Ran-1 is a GTP-binding protein that mediates the interaction between mitotic chromosomes and kinetochore microtubules. Plays a crucial role in nuclear envelope assembly at the end of each cell division. Required for the import of protein into the nucleus and also for RNA export. RCC1 (ran-3)/Ran (ran-1) complex (together with other proteins) acts as a component of a signal transmission pathway that detects unreplicated DNA. The chain is GTP-binding nuclear protein ran-1 (ran-1) from Caenorhabditis elegans.